The chain runs to 155 residues: D-aminoacyl-tRNA deacylase (155 aa).

Positions 137–138 match the Gly-cisPro motif, important for rejection of L-amino acids motif; that stretch reads GP.

It belongs to the DTD family. Homodimer.

It localises to the cytoplasm. The enzyme catalyses glycyl-tRNA(Ala) + H2O = tRNA(Ala) + glycine + H(+). It catalyses the reaction a D-aminoacyl-tRNA + H2O = a tRNA + a D-alpha-amino acid + H(+). In terms of biological role, an aminoacyl-tRNA editing enzyme that deacylates mischarged D-aminoacyl-tRNAs. Also deacylates mischarged glycyl-tRNA(Ala), protecting cells against glycine mischarging by AlaRS. Acts via tRNA-based rather than protein-based catalysis; rejects L-amino acids rather than detecting D-amino acids in the active site. By recycling D-aminoacyl-tRNA to D-amino acids and free tRNA molecules, this enzyme counteracts the toxicity associated with the formation of D-aminoacyl-tRNA entities in vivo and helps enforce protein L-homochirality. The polypeptide is D-aminoacyl-tRNA deacylase (Geotalea uraniireducens (strain Rf4) (Geobacter uraniireducens)).